A 359-amino-acid chain; its full sequence is Guanine nucleotide-binding protein subunit alpha-11 (359 aa).

Residues C9 and C10 are each lipidated (S-palmitoyl cysteine). Residues 38–359 (RELKLLLLGT…QLNLKEYNLV (322 aa)) enclose the G-alpha domain. The segment at 41–54 (KLLLLGTGESGKST) is G1 motif. Residues 46–53 (GTGESGKS) and 180–183 (LRVR) contribute to the GTP site. S53 contributes to the Mg(2+) binding site. Residues 178–186 (DVLRVRVPT) are G2 motif. T186 is a binding site for Mg(2+). The interval 201 to 210 (FRMVDVGGQR) is G3 motif. The G4 motif stretch occupies residues 270–277 (ILFLNKKD). Residues 274–277 (NKKD) and A331 contribute to the GTP site. The interval 329 to 334 (TCATDT) is G5 motif.

Belongs to the G-alpha family. G(q) subfamily. G proteins are composed of 3 units; alpha, beta and gamma. The alpha chain contains the guanine nucleotide binding site. Interacts with RGS22. Interacts with NTSR1.

It localises to the cell membrane. Its subcellular location is the cytoplasm. It catalyses the reaction GTP + H2O = GDP + phosphate + H(+). Its function is as follows. Guanine nucleotide-binding proteins (G proteins) function as transducers downstream of G protein-coupled receptors (GPCRs) in numerous signaling cascades. The alpha chain contains the guanine nucleotide binding site and alternates between an active, GTP-bound state and an inactive, GDP-bound state. Signaling by an activated GPCR promotes GDP release and GTP binding. The alpha subunit has a low GTPase activity that converts bound GTP to GDP, thereby terminating the signal. Both GDP release and GTP hydrolysis are modulated by numerous regulatory proteins. Signaling is mediated via phospholipase C-beta-dependent inositol lipid hydrolysis for signal propagation: activates phospholipase C-beta: following GPCR activation, GNA11 activates PLC-beta (PLCB1, PLCB2, PLCB3 or PLCB4), leading to production of diacylglycerol (DAG) and inositol 1,4,5-trisphosphate (IP3). Transduces FFAR4 signaling in response to long-chain fatty acids (LCFAs). Together with GNAQ, required for heart development. In the respiratory epithelium, transmits OXGR1-dependent signals that lead to downstream intracellular Ca(2+) release and mucocilliary clearance of airborne pathogens. This Sus scrofa (Pig) protein is Guanine nucleotide-binding protein subunit alpha-11 (GNA11).